The sequence spans 301 residues: CPX chromosomal region candidate gene 1 protein (301 aa).

Positions 1 to 77 are disordered; it reads MSYPTKEGSD…ENSELETEIQ (77 aa). Residues 44–60 show a composition bias toward polar residues; the sequence is VETNPINREPGTATSQE.

As to expression, expressed in a variety of fetal tissues.

The chain is CPX chromosomal region candidate gene 1 protein (CPXCR1) from Homo sapiens (Human).